The sequence spans 1012 residues: Formate dehydrogenase subunit alpha (1012 aa).

The segment at residues 1-35 is a signal peptide (tat-type signal); the sequence is MLIKRRAFLKLTAAGATLSAFGGLGVDLAPAKAQA. Positions 45-103 constitute a 4Fe-4S Mo/W bis-MGD-type domain; the sequence is AKQTTSVCCYCSVGCGLIVHTDKKTNRAINVEGDPDHPINEGSLCAKGASTWQLAENER. 4 residues coordinate [4Fe-4S] cluster: cysteine 52, cysteine 55, cysteine 59, and cysteine 89. Selenocysteine 193 provides a ligand contact to W-bis(molybdopterin guanine dinucleotide). Residue selenocysteine 193 is a non-standard amino acid, selenocysteine. Ca(2+) is bound by residues threonine 393, lysine 395, lysine 398, leucine 428, and asparagine 430. A disulfide bridge connects residues cysteine 852 and cysteine 879.

It belongs to the prokaryotic molybdopterin-containing oxidoreductase family. In terms of assembly, heterodimer of alpha (FdhA) and beta (FdhB) subunits. The cofactor is [4Fe-4S] cluster. Requires W-bis(molybdopterin guanine dinucleotide) as cofactor. Post-translationally, the disulfide bond is likely to be broken in the active form of this enzyme. Predicted to be exported by the Tat system. The position of the signal peptide cleavage has been experimentally proven.

The protein localises to the periplasm. It catalyses the reaction formate + NAD(+) = CO2 + NADH. Alpha chain of the formate dehydrogenase (FDH) catalyze the reversible two-electron oxidation of formate to carbon dioxide. FDH loses activity in the presence of air, but this activity can be restored. The alpha subunit of formate dehydrogenase forms the active site. This Megalodesulfovibrio gigas (Desulfovibrio gigas) protein is Formate dehydrogenase subunit alpha.